We begin with the raw amino-acid sequence, 751 residues long: Semaphorin-3C (751 aa).

An N-terminal signal peptide occupies residues 1–21; sequence MAVLALHAVFGIFIYFSSVKG. The region spanning 28 to 511 is the Sema domain; that stretch reads RVFLTFNELQ…SEEGVTQVPL (484 aa). Asparagine 81 carries an N-linked (GlcNAc...) asparagine glycan. A disulfide bridge links cysteine 101 with cysteine 112. Asparagine 123 is a glycosylation site (N-linked (GlcNAc...) asparagine). Intrachain disulfides connect cysteine 130–cysteine 139, cysteine 266–cysteine 378, and cysteine 290–cysteine 338. Asparagine 268 carries N-linked (GlcNAc...) asparagine glycosylation. A glycan (N-linked (GlcNAc...) asparagine) is linked at asparagine 465. Residues cysteine 514 and cysteine 532 are joined by a disulfide bond. One can recognise an Ig-like C2-type domain in the interval 571–655; that stretch reads AYRNAAETVQ…TENNFKQTLA (85 aa). 2 N-linked (GlcNAc...) asparagine glycosylation sites follow: asparagine 585 and asparagine 586. Cysteine 643 and cysteine 709 are joined by a disulfide. A compositionally biased stretch (basic and acidic residues) spans 712–731; it reads SRQQGQRREEPQKMRGDYSK. Residues 712 to 751 form a disordered region; sequence SRQQGQRREEPQKMRGDYSKLKALINSRKSRNRRNQLPAS.

It belongs to the semaphorin family. As to expression, collapsin-1, -2, -3, and -5 bind to overlapping but distinct axon tracts.

It is found in the secreted. In terms of biological role, induces the collapse and paralysis of neuronal growth cones. Could potentially act as repulsive cues toward specific neuronal populations. Binds to neuropilin. This is Semaphorin-3C (SEMA3C) from Gallus gallus (Chicken).